A 439-amino-acid polypeptide reads, in one-letter code: Cobyrinate a,c-diamide synthase (439 aa).

Residues 214–235 are disordered; sequence ETARAPPEVATTERNTGDSPAD. One can recognise a GATase cobBQ-type domain in the interval 237–428; that stretch reads RVAVAQDSAF…CHCHGESGAF (192 aa). Cys-317 serves as the catalytic Nucleophile.

This sequence belongs to the CobB/CbiA family. Mg(2+) is required as a cofactor.

The enzyme catalyses cob(II)yrinate + 2 L-glutamine + 2 ATP + 2 H2O = cob(II)yrinate a,c diamide + 2 L-glutamate + 2 ADP + 2 phosphate + 2 H(+). Its pathway is cofactor biosynthesis; adenosylcobalamin biosynthesis; cob(II)yrinate a,c-diamide from sirohydrochlorin (anaerobic route): step 10/10. Its function is as follows. Catalyzes the ATP-dependent amidation of the two carboxylate groups at positions a and c of cobyrinate, using either L-glutamine or ammonia as the nitrogen source. The sequence is that of Cobyrinate a,c-diamide synthase from Haloarcula marismortui (strain ATCC 43049 / DSM 3752 / JCM 8966 / VKM B-1809) (Halobacterium marismortui).